A 410-amino-acid chain; its full sequence is Multifunctional CCA protein (410 aa).

ATP-binding residues include glycine 8 and arginine 11. Residues glycine 8 and arginine 11 each coordinate CTP. Mg(2+) contacts are provided by glutamate 21 and aspartate 23. Arginine 91, arginine 137, and arginine 140 together coordinate ATP. The CTP site is built by arginine 91, arginine 137, and arginine 140. Residues 228–329 enclose the HD domain; the sequence is TLLHQFLCLK…WKLFKSLDIL (102 aa).

The protein belongs to the tRNA nucleotidyltransferase/poly(A) polymerase family. Bacterial CCA-adding enzyme type 1 subfamily. In terms of assembly, monomer. Can also form homodimers and oligomers. Mg(2+) serves as cofactor. Ni(2+) is required as a cofactor.

The enzyme catalyses a tRNA precursor + 2 CTP + ATP = a tRNA with a 3' CCA end + 3 diphosphate. The catalysed reaction is a tRNA with a 3' CCA end + 2 CTP + ATP = a tRNA with a 3' CCACCA end + 3 diphosphate. Functionally, catalyzes the addition and repair of the essential 3'-terminal CCA sequence in tRNAs without using a nucleic acid template. Adds these three nucleotides in the order of C, C, and A to the tRNA nucleotide-73, using CTP and ATP as substrates and producing inorganic pyrophosphate. tRNA 3'-terminal CCA addition is required both for tRNA processing and repair. Also involved in tRNA surveillance by mediating tandem CCA addition to generate a CCACCA at the 3' terminus of unstable tRNAs. While stable tRNAs receive only 3'-terminal CCA, unstable tRNAs are marked with CCACCA and rapidly degraded. The chain is Multifunctional CCA protein from Alcanivorax borkumensis (strain ATCC 700651 / DSM 11573 / NCIMB 13689 / SK2).